Reading from the N-terminus, the 326-residue chain is Toluene-4-monooxygenase system, ferredoxin--NAD(+) reductase component (326 aa).

The region spanning 1–92 is the 2Fe-2S ferredoxin-type domain; sequence MFNIQSDDLL…DLKIKVINRA (92 aa). [2Fe-2S] cluster contacts are provided by C36, C41, C44, and C76. Residues 95–326 form a ferredoxin-reductase region; sequence RASHPPKRFS…FEAIHFDRFF (232 aa). Residues 100–195 form the FAD-binding FR-type domain; sequence PKRFSTRVVS…DGPYGLSVLK (96 aa). Residues 146-149, 162-164, and 170-172 contribute to the FAD site; these read RAYS, IVK, and KVS.

The protein belongs to the bacterial ring-hydroxylating dioxygenase ferredoxin reductase family. In terms of assembly, monomer. The alkene monooxygenase multicomponent enzyme system is composed of an electron transfer component and a monooxygenase component interacting with the effector protein TmoD. The electron transfer component is composed of a ferredoxin reductase (TmoF) and a ferredoxin (TmoC), and the monooxygenase component is formed by a heterohexamer (dimer of heterotrimers) of two alpha subunits (TmoA), two beta subunits (TmoE) and two gamma subunits (TmoB). FAD is required as a cofactor. [2Fe-2S] cluster serves as cofactor.

The enzyme catalyses 2 reduced [2Fe-2S]-[ferredoxin] + NAD(+) + H(+) = 2 oxidized [2Fe-2S]-[ferredoxin] + NADH. The protein operates within xenobiotic degradation; toluene degradation. In terms of biological role, reductase component of the toluene-4-monooxygenase multicomponent enzyme system which catalyzes the O2- and NADH-dependent hydroxylation of toluene to form p-cresol. Ferredoxin reductase catalyzes the transfer of electrons from NADH to ferredoxin (TmoC). This Ectopseudomonas mendocina (Pseudomonas mendocina) protein is Toluene-4-monooxygenase system, ferredoxin--NAD(+) reductase component.